Reading from the N-terminus, the 214-residue chain is Pyridoxine/pyridoxamine 5'-phosphate oxidase (214 aa).

Substrate is bound by residues arginine 8–tyrosine 11 and lysine 66. FMN is bound by residues arginine 61–lysine 66, phenylalanine 76–threonine 77, arginine 82, lysine 83, and glutamine 105. Residues tyrosine 123, arginine 127, and serine 131 each contribute to the substrate site. Residues glutamine 140 to serine 141 and tryptophan 184 contribute to the FMN site. Arginine 190 to histidine 192 provides a ligand contact to substrate. Arginine 194 lines the FMN pocket.

The protein belongs to the pyridoxamine 5'-phosphate oxidase family. In terms of assembly, homodimer. FMN is required as a cofactor.

It carries out the reaction pyridoxamine 5'-phosphate + O2 + H2O = pyridoxal 5'-phosphate + H2O2 + NH4(+). The enzyme catalyses pyridoxine 5'-phosphate + O2 = pyridoxal 5'-phosphate + H2O2. It participates in cofactor metabolism; pyridoxal 5'-phosphate salvage; pyridoxal 5'-phosphate from pyridoxamine 5'-phosphate: step 1/1. Its pathway is cofactor metabolism; pyridoxal 5'-phosphate salvage; pyridoxal 5'-phosphate from pyridoxine 5'-phosphate: step 1/1. Catalyzes the oxidation of either pyridoxine 5'-phosphate (PNP) or pyridoxamine 5'-phosphate (PMP) into pyridoxal 5'-phosphate (PLP). The sequence is that of Pyridoxine/pyridoxamine 5'-phosphate oxidase from Burkholderia pseudomallei (strain 1106a).